The chain runs to 316 residues: Protoheme IX farnesyltransferase 2 (316 aa).

Residues 1 to 15 (MEQNLNSEQKPQSSA) are compositionally biased toward polar residues. The interval 1–24 (MEQNLNSEQKPQSSAKPRGKSSRS) is disordered. The next 7 membrane-spanning stretches (helical) occupy residues 62 to 82 (IPEMIFSTVGSALVIGAAGAF), 117 to 137 (IVMLIIGLAVLALASPLAAAF), 163 to 183 (IGSISGAVPPLIGWSAVSTDI), 188 to 208 (IARFIFVMVIWQMPHFYAIAI), 231 to 251 (TYYQTNFYLILLILSSFLFGS), 252 to 272 (LSVGIMLVALLLSIAWLVMSI), and 293 to 313 (LFHMTILFTTVIVYSLVGVIF).

Belongs to the UbiA prenyltransferase family. Protoheme IX farnesyltransferase subfamily. In terms of assembly, interacts with CtaA.

The protein localises to the cell membrane. It catalyses the reaction heme b + (2E,6E)-farnesyl diphosphate + H2O = Fe(II)-heme o + diphosphate. It functions in the pathway porphyrin-containing compound metabolism; heme O biosynthesis; heme O from protoheme: step 1/1. In terms of biological role, converts heme B (protoheme IX) to heme O by substitution of the vinyl group on carbon 2 of heme B porphyrin ring with a hydroxyethyl farnesyl side group. The chain is Protoheme IX farnesyltransferase 2 from Lysinibacillus sphaericus (strain C3-41).